An 896-amino-acid chain; its full sequence is Rho GTPase-activating protein gacM (896 aa).

The interval 1-97 is disordered; the sequence is MSSFIGWKKN…SSNDTIGKSS (97 aa). The segment covering 10–26 has biased composition (low complexity); that stretch reads NSNSGGTPGASPTSSSP. Polar residues predominate over residues 27 to 38; the sequence is LNSTISNANSVS. Composition is skewed to low complexity over residues 45–57 and 65–97; these read SISN…LSSS and NSNN…GKSS. Residues 139–330 enclose the Rho-GAP domain; that stretch reads QPINPNTEFG…LWIEEFDMIS (192 aa). 4 stretches are compositionally biased toward low complexity: residues 375–391, 400–427, 448–460, and 473–506; these read IQQQ…QSHP, SSLS…LLPT, PTPT…TPQT, and NNNS…NNNN. Disordered regions lie at residues 375–514 and 701–770; these read IQQQ…GSPL and LPTG…ENQI. A compositionally biased stretch (polar residues) spans 702–711; that stretch reads PTGSSWSDFE. 2 stretches are compositionally biased toward low complexity: residues 712–743 and 751–761; these read NNSS…NSSP and SNGLNSSSNSN.

It localises to the cytoplasm. In terms of biological role, rho GTPase-activating protein involved in the signal transduction pathway. The sequence is that of Rho GTPase-activating protein gacM (gacM) from Dictyostelium discoideum (Social amoeba).